Here is a 38-residue protein sequence, read N- to C-terminus: Photosystem II reaction center protein X 1 (38 aa).

The helical transmembrane segment at 8–28 (FLWSLLYGAVVLGLLFGAIVF) threads the bilayer.

This sequence belongs to the PsbX family. Type 1 subfamily. In terms of assembly, PSII is composed of 1 copy each of membrane proteins PsbA, PsbB, PsbC, PsbD, PsbE, PsbF, PsbH, PsbI, PsbJ, PsbK, PsbL, PsbM, PsbT, PsbX, PsbY, PsbZ, Psb30/Ycf12, peripheral proteins PsbO, CyanoQ (PsbQ), PsbU, PsbV and a large number of cofactors. It forms dimeric complexes.

It is found in the cellular thylakoid membrane. Involved in the binding and/or turnover of quinones at the Q(B) site of photosystem II (PSII). PSII is a light-driven water plastoquinone oxidoreductase, using light energy to abstract electrons from H(2)O, generating a proton gradient subsequently used for ATP formation. In Synechococcus sp. (strain JA-3-3Ab) (Cyanobacteria bacterium Yellowstone A-Prime), this protein is Photosystem II reaction center protein X 1.